Here is a 542-residue protein sequence, read N- to C-terminus: Membrane protein insertase YidC (542 aa).

The next 5 helical transmembrane spans lie at leucine 7 to phenylalanine 27, phenylalanine 338 to valine 358, methionine 417 to phenylalanine 437, leucine 455 to leucine 475, and phenylalanine 494 to tryptophan 514.

This sequence belongs to the OXA1/ALB3/YidC family. Type 1 subfamily. As to quaternary structure, interacts with the Sec translocase complex via SecD. Specifically interacts with transmembrane segments of nascent integral membrane proteins during membrane integration.

It is found in the cell inner membrane. Functionally, required for the insertion and/or proper folding and/or complex formation of integral membrane proteins into the membrane. Involved in integration of membrane proteins that insert both dependently and independently of the Sec translocase complex, as well as at least some lipoproteins. Aids folding of multispanning membrane proteins. The protein is Membrane protein insertase YidC of Actinobacillus pleuropneumoniae serotype 3 (strain JL03).